Consider the following 353-residue polypeptide: tRNA-specific 2-thiouridylase MnmA 2 (353 aa).

Residue 6–13 participates in ATP binding; the sequence is LLSGGVDS. The interval 92–94 is interaction with target base in tRNA; the sequence is NPD. Residue Cys-97 is the Nucleophile of the active site. Cys-97 and Cys-192 are disulfide-bonded. An ATP-binding site is contributed by Gly-120. Residues 142-144 form an interaction with tRNA region; the sequence is KDQ. Cys-192 functions as the Cysteine persulfide intermediate in the catalytic mechanism.

It belongs to the MnmA/TRMU family.

It is found in the cytoplasm. It carries out the reaction S-sulfanyl-L-cysteinyl-[protein] + uridine(34) in tRNA + AH2 + ATP = 2-thiouridine(34) in tRNA + L-cysteinyl-[protein] + A + AMP + diphosphate + H(+). In terms of biological role, catalyzes the 2-thiolation of uridine at the wobble position (U34) of tRNA, leading to the formation of s(2)U34. This chain is tRNA-specific 2-thiouridylase MnmA 2, found in Bacteroides fragilis (strain ATCC 25285 / DSM 2151 / CCUG 4856 / JCM 11019 / LMG 10263 / NCTC 9343 / Onslow / VPI 2553 / EN-2).